Here is an 89-residue protein sequence, read N- to C-terminus: MNSQQQKQPCTPPPQPQQQQVKQPCQPPPQEPCIPKTKEPCHPKVPEPCHPKVPEPCQPKVPEPCQPKVPEPCPSTVTPAPAQQKTKQK.

Residues 1-29 (MNSQQQKQPCTPPPQPQQQQVKQPCQPPP) are disordered. Tandem repeats lie at residues 3-14 (SQQQKQPCTPPP), 18-29 (QQQVKQPCQPPP), 31-38 (EPCIPKTK), 39-46 (EPCHPKVP), 47-54 (EPCHPKVP), 55-62 (EPCQPKVP), 63-70 (EPCQPKVP), and 71-78 (EPCPSTVT). The interval 3 to 29 (SQQQKQPCTPPPQPQQQQVKQPCQPPP) is 2 X 12 AA approximate repeats. The tract at residues 31-78 (EPCIPKTKEPCHPKVPEPCHPKVPEPCQPKVPEPCQPKVPEPCPSTVT) is 6 X 8 AA approximate tandem repeats. The tract at residues 68 to 89 (KVPEPCPSTVTPAPAQQKTKQK) is disordered. The segment covering 75-89 (STVTPAPAQQKTKQK) has biased composition (polar residues).

Belongs to the cornifin (SPRR) family.

The protein resides in the cytoplasm. Functionally, cross-linked envelope protein of keratinocytes. It is a keratinocyte protein that first appears in the cell cytosol, but ultimately becomes cross-linked to membrane proteins by transglutaminase. All that results in the formation of an insoluble envelope beneath the plasma membrane. This chain is Cornifin-A (SPRR1A), found in Homo sapiens (Human).